The primary structure comprises 1154 residues: Serine-aspartate repeat-containing protein E (1154 aa).

The signal sequence occupies residues 1–52; sequence MINRDNKKAITKKGMISNRLNKFSIRKYTVGTASILVGTTLIFGLGNQEAKA. The short motif at 23–34 is the YSIRK-G/S signaling motif element; the sequence is FSIRKYTVGTAS. The ligand binding A region stretch occupies residues 53-606; it reads AENTSTENAK…GDGTVKPEEK (554 aa). The disordered stretch occupies residues 54 to 230; the sequence is ENTSTENAKQ…SKEELKNNPE (177 aa). Positions 61–75 are enriched in basic and acidic residues; it reads AKQDDATTSDNKEVV. The span at 77-90 shows a compositional bias: low complexity; sequence ETENNSTTENNSTN. Residues 92 to 108 are compositionally biased toward basic and acidic residues; that stretch reads IKKETNTDSQPEAKKES. The span at 118–129 shows a compositional bias: polar residues; that stretch reads NNVTATTETKPQ. Basic and acidic residues predominate over residues 130–145; the sequence is NIEKENVKPSTDKTAT. Positions 166-178 are enriched in low complexity; the sequence is TTKPSTSEPSTSE. The segment covering 179-212 has biased composition (polar residues); that stretch reads IQTKPTTPQESTNIENSQPQPTPSKVDNQVTDAT. Positions 221–230 are enriched in basic and acidic residues; the sequence is SKEELKNNPE. CNA-B domains lie at 607 to 719, 720 to 829, and 830 to 940; these read LYKI…YKEP, KYNL…YKTP, and KYSL…EEDT. Residues 904–1129 are disordered; it reads VTNTTEDDKD…TGSENNGSNN (226 aa). Composition is skewed to acidic residues over residues 908–918 and 935–1093; these read TEDDKDADGGE and YFEE…DSDS. Positions 1117–1121 match the LPXTG sorting signal motif; the sequence is LPETG. Residue threonine 1120 is modified to Pentaglycyl murein peptidoglycan amidated threonine. The propeptide at 1121-1154 is removed by sortase; the sequence is GSENNGSNNATLFGGLFAALGSLLLFGRRKKQNK.

This sequence belongs to the serine-aspartate repeat-containing protein (SDr) family. In terms of assembly, interacts with host complement factor H/CFAH (via C-terminus). Interacts with host complement regulator C4BPA.

The protein resides in the secreted. Its subcellular location is the cell wall. Cell surface-associated calcium-binding protein which plays an important role in adhesion and pathogenesis. Contributes to the resistance to killing by innate immune components in blood and thus attenuates bacterial clearance by interacting with host complement factor H/CFAH and modulating its activity. Also inhibits bacterial opsonization and killing by interacting with host complement regulator C4BPA and thus inhibiting classical complement pathway activation. This is Serine-aspartate repeat-containing protein E (sdrE) from Staphylococcus aureus (strain USA300).